The chain runs to 206 residues: Ribonuclease HII (206 aa).

An RNase H type-2 domain is found at 22-206 (RFICGVDEAG…ISFLKNILSL (185 aa)). Positions 28, 29, and 120 each coordinate a divalent metal cation.

Belongs to the RNase HII family. The cofactor is Mn(2+). Mg(2+) is required as a cofactor.

It is found in the cytoplasm. The enzyme catalyses Endonucleolytic cleavage to 5'-phosphomonoester.. Its function is as follows. Endonuclease that specifically degrades the RNA of RNA-DNA hybrids. The polypeptide is Ribonuclease HII (Caldicellulosiruptor bescii (strain ATCC BAA-1888 / DSM 6725 / KCTC 15123 / Z-1320) (Anaerocellum thermophilum)).